A 157-amino-acid polypeptide reads, in one-letter code: Transcriptional repressor NrdR (157 aa).

A disordered region spans residues 1–21; sequence MRCPYCGSEDSQVKDSRPAED. A zinc finger lies at 3-34; the sequence is CPYCGSEDSQVKDSRPAEDGNAIRRRRICPDC. Residues 11–21 are compositionally biased toward basic and acidic residues; it reads SQVKDSRPAED. The ATP-cone domain occupies 49 to 139; sequence LMIIKKTGRK…VYRDFSHAED (91 aa).

Belongs to the NrdR family. Requires Zn(2+) as cofactor.

In terms of biological role, negatively regulates transcription of bacterial ribonucleotide reductase nrd genes and operons by binding to NrdR-boxes. The protein is Transcriptional repressor NrdR of Sinorhizobium medicae (strain WSM419) (Ensifer medicae).